The following is a 966-amino-acid chain: Regulator of telomere elongation helicase 1 homolog (966 aa).

The 278-residue stretch at 7–284 (AGIPVHFPFE…QDMAGDEPKD (278 aa)) folds into the Helicase ATP-binding domain. 42–49 (SPTGTGKT) is an ATP binding site. The [4Fe-4S] cluster site is built by Cys-146, Cys-164, Cys-173, and Cys-209. Positions 233 to 236 (DEAH) match the DEAH box motif. Residues 844–864 (VKIHKRERSSPTAPESTSQVS) are disordered. The segment covering 853–863 (SPTAPESTSQV) has biased composition (polar residues). At Thr-855 the chain carries Phosphothreonine.

This sequence belongs to the helicase family. RAD3/XPD subfamily.

It localises to the nucleus. It carries out the reaction ATP + H2O = ADP + phosphate + H(+). Its function is as follows. A probable ATP-dependent DNA helicase implicated in DNA repair and the maintenance of genomic stability. Acts as an anti-recombinase to counteract toxic recombination and limit crossover during meiosis. Regulates meiotic recombination and crossover homeostasis by physically dissociating strand invasion events and thereby promotes noncrossover repair by meiotic synthesis dependent strand annealing (SDSA) as well as disassembly of D loop recombination intermediates. The protein is Regulator of telomere elongation helicase 1 homolog of Drosophila sechellia (Fruit fly).